Reading from the N-terminus, the 284-residue chain is Probable sulfate transport system permease protein cysT (284 aa).

7 helical membrane-spanning segments follow: residues 25–45, 75–95, 107–127, 145–165, 194–214, 223–243, and 255–275; these read AWAL…GALL, SALI…WVLV, AAVD…LATV, VAFT…PFVV, FLRV…ALAF, SVVI…VLIF, and TVIG…INWI. Positions 69 to 272 constitute an ABC transmembrane type-1 domain; it reads YAVTLSSALI…LISLTLLLAI (204 aa).

Belongs to the binding-protein-dependent transport system permease family. CysTW subfamily.

The protein resides in the plastid. The protein localises to the chloroplast membrane. Its function is as follows. Part of the ABC transporter complex cysAWTP (TC 3.A.1.6.1) involved in sulfate/thiosulfate import. Probably responsible for the translocation of the substrate across the membrane. This Nephroselmis olivacea (Green alga) protein is Probable sulfate transport system permease protein cysT (cysT).